A 637-amino-acid chain; its full sequence is ATP-dependent zinc metalloprotease FtsH (637 aa).

At 1–44 the chain is on the cytoplasmic side; it reads MAKHSQHSSPPRKLFDTLNDLWQRAKSEAGLSAEGPEGTRRRNN. Residues 45–65 traverse the membrane as a helical segment; that stretch reads LILYLLLVLSTLYLLNGYQTL. Topologically, residues 66–141 are periplasmic; sequence RNEEIPYSEF…TVRYGSNWFS (76 aa). A helical transmembrane segment spans residues 142–162; the sequence is SLIFNWIVPIVLLTLFWTWMA. The Cytoplasmic segment spans residues 163–637; sequence RRMTGGRGFL…VKAVIREAAS (475 aa). 231 to 238 is a binding site for ATP; the sequence is GPPGTGKT. Histidine 454 serves as a coordination point for Zn(2+). Residue glutamate 455 is part of the active site. Histidine 458 and aspartate 531 together coordinate Zn(2+).

It in the central section; belongs to the AAA ATPase family. In the C-terminal section; belongs to the peptidase M41 family. Homohexamer. It depends on Zn(2+) as a cofactor.

It localises to the cell inner membrane. Its function is as follows. Acts as a processive, ATP-dependent zinc metallopeptidase for both cytoplasmic and membrane proteins. Plays a role in the quality control of integral membrane proteins. This is ATP-dependent zinc metalloprotease FtsH from Methylococcus capsulatus (strain ATCC 33009 / NCIMB 11132 / Bath).